Reading from the N-terminus, the 217-residue chain is Methylthioribulose-1-phosphate dehydratase (217 aa).

Zn(2+) contacts are provided by H106 and H108.

This sequence belongs to the aldolase class II family. MtnB subfamily. Requires Zn(2+) as cofactor.

It catalyses the reaction 5-(methylsulfanyl)-D-ribulose 1-phosphate = 5-methylsulfanyl-2,3-dioxopentyl phosphate + H2O. Its pathway is amino-acid biosynthesis; L-methionine biosynthesis via salvage pathway; L-methionine from S-methyl-5-thio-alpha-D-ribose 1-phosphate: step 2/6. Functionally, catalyzes the dehydration of methylthioribulose-1-phosphate (MTRu-1-P) into 2,3-diketo-5-methylthiopentyl-1-phosphate (DK-MTP-1-P). The chain is Methylthioribulose-1-phosphate dehydratase from Xanthomonas euvesicatoria pv. vesicatoria (strain 85-10) (Xanthomonas campestris pv. vesicatoria).